The sequence spans 1453 residues: Leucine-rich repeat-containing protein 9 (1453 aa).

LRR repeat units follow at residues 53–78 (FPNL…CLQL), 97–119 (CRNL…LEKL), 120–141 (IKLK…LQTL), 142–164 (KNLK…LDSN), 166–188 (QLER…NLTR), 224–248 (LQRF…AMKK), and 264–287 (KEDL…RVKL). The segment at 302 to 321 (LKGSGKGHSDGSNNSKVTDP) is disordered. LRR repeat units follow at residues 344 to 367 (LNAL…IYHI), 671 to 693 (KARP…TSVY), 694 to 715 (SHIV…LSKL), 716 to 737 (TGLR…VYHL), 739 to 758 (NLEY…GFRG), 759 to 784 (LMKL…MLCK), 786 to 812 (TTSL…VIGR), 886 to 908 (YLKI…LEKL), 909 to 930 (ENLK…LESC), 931 to 952 (INLE…ISKM), 953 to 975 (TKLT…TFDN), 976 to 1001 (MLHL…SFTL), 1023 to 1048 (LCNL…LFVI), 1092 to 1115 (FKQM…PVDQ), 1116 to 1138 (FRNV…LIYL), 1139 to 1161 (PNVK…LKPQ), 1201 to 1224 (MHSL…QLNR), 1225 to 1247 (LRNL…LDNL), 1248 to 1270 (VVLQ…AFAK), 1272 to 1292 (SSLL…KLQS), 1293 to 1317 (LVKL…KLDV), 1319 to 1345 (STLR…IFRL), and 1365 to 1388 (EFHL…PMDG).

This Homo sapiens (Human) protein is Leucine-rich repeat-containing protein 9 (LRRC9).